The primary structure comprises 251 residues: Hydroxyacylglutathione hydrolase (251 aa).

The Zn(2+) site is built by H53, H55, D57, H58, H110, D127, and H165.

Belongs to the metallo-beta-lactamase superfamily. Glyoxalase II family. As to quaternary structure, monomer. The cofactor is Zn(2+).

It catalyses the reaction an S-(2-hydroxyacyl)glutathione + H2O = a 2-hydroxy carboxylate + glutathione + H(+). The protein operates within secondary metabolite metabolism; methylglyoxal degradation; (R)-lactate from methylglyoxal: step 2/2. Functionally, thiolesterase that catalyzes the hydrolysis of S-D-lactoyl-glutathione to form glutathione and D-lactic acid. The protein is Hydroxyacylglutathione hydrolase of Shigella boydii serotype 18 (strain CDC 3083-94 / BS512).